The following is a 287-amino-acid chain: Efem/EfeO family lipoprotein (287 aa).

Residues 1–17 form the signal peptide; it reads MKKLPTILLASSLLLAA. Cys-18 is lipidated: N-palmitoyl cysteine. Cys-18 is lipidated: S-diacylglycerol cysteine. The interval 20–50 is disordered; the sequence is NNSHSDDNSNKDKQSQSSKGENKASLQKATK. The span at 23–33 shows a compositional bias: basic and acidic residues; it reads HSDDNSNKDKQ.

The protein belongs to the EfeM/EfeO family.

The protein resides in the cell membrane. The chain is Efem/EfeO family lipoprotein from Staphylococcus haemolyticus (strain JCSC1435).